A 170-amino-acid polypeptide reads, in one-letter code: Ribosome maturation factor RimM (170 aa).

The PRC barrel domain maps to 98 to 170 (PDEYYWVDLE…LIVVDWDPDF (73 aa)).

The protein belongs to the RimM family. In terms of assembly, binds ribosomal protein uS19.

It localises to the cytoplasm. In terms of biological role, an accessory protein needed during the final step in the assembly of 30S ribosomal subunit, possibly for assembly of the head region. Essential for efficient processing of 16S rRNA. May be needed both before and after RbfA during the maturation of 16S rRNA. It has affinity for free ribosomal 30S subunits but not for 70S ribosomes. This Xanthomonas campestris pv. campestris (strain 8004) protein is Ribosome maturation factor RimM.